The following is a 542-amino-acid chain: La-related protein 7 homolog (542 aa).

The region spanning 112-239 (VAEELDIKES…KRRFPFNLEQ (128 aa)) is the HTH La-type RNA-binding domain. One can recognise an RRM domain in the interval 247–335 (RTLYIDFLPP…GSIRIITYKK (89 aa)). Positions 374 to 542 (EIKQNCLIKI…KQNITQNYNK (169 aa)) constitute a xRRM domain.

Belongs to the LARP7 family. As to quaternary structure, component of the telomerase holoenzyme complex, composed of the catalytic core (the catalytic subunit TERT, the telomerase RNA template component TER and TAP65/p65), which is associated with two heterotrimeric subcomplexes: (i) the replication protein A (RPA)-related subcomplex, composed of TEB1, RPA2/TEB2 and RPA3/TEB3 and (ii) the CST-like subcomplex, composed of TAP75/p75, TAP45/p45 and TAP19/p19. TEB1 and the CST-like subcomplex are tethered to the catalytic core by TAP50/p50.

The protein localises to the chromosome. The protein resides in the telomere. Its function is as follows. RNA-binding protein required for assembly of the holoenzyme telomerase ribonucleoprotein (RNP) complex. Telomerase is an essential ribonucleoprotein enzyme that copies new telomeric repeats onto chromosome ends by repetitively synthesizing the short telomere-repeat sequence 5'-TTGGGG-3' using an RNA template component TER. TAP65/p65 specifically binds telomerase RNA template TER and is required for biogenesis and placement of the TER stem-terminus element: TAP65/p65 first protects the 3'-end of TER from degradation and acts as a chaperone to correctly fold TER for protein binding; it then bends TER stem-loop IV to position it for interaction of stem-loop IV with catalytic TERT RNA-binding domain. The sequence is that of La-related protein 7 homolog from Tetrahymena thermophila (strain SB210).